The sequence spans 744 residues: Leukocyte immunoglobulin-like receptor subfamily B member 3A (744 aa).

The N-terminal stretch at 1-24 (MTFTFTALLCLGLTLGLWIPVLTG) is a signal peptide. Over 25 to 543 (SLPKPILRVQ…PPDGLQRYLK (519 aa)) the chain is Extracellular. Ig-like C2-type domains are found at residues 26 to 119 (LPKP…VVTG), 121 to 221 (YSKP…LVSG), 223 to 316 (LQKP…VVTG), 320 to 419 (YHPL…LITG), and 426 to 520 (FLSV…IVSG). Cystine bridges form between Cys49-Cys98, Cys144-Cys197, and Cys246-Cys295. Asn79 carries N-linked (GlcNAc...) asparagine glycosylation. N-linked (GlcNAc...) asparagine glycosylation occurs at Asn338. A disulfide bond links Cys343 and Cys395. Asn440 carries an N-linked (GlcNAc...) asparagine glycan. Cys445 and Cys496 are joined by a disulfide. Residues 544-564 (ALIGVSVAFLLFLFILIFILL) traverse the membrane as a helical segment. The Cytoplasmic segment spans residues 565–744 (RRRHQEKFRK…PGAVPKNKKQ (180 aa)). Residues 572 to 584 (FRKDDEDAQKGKE) are compositionally biased toward basic and acidic residues. 3 disordered regions span residues 572–617 (FRKD…ESLY), 630–652 (ELDT…VEPS), and 667–744 (EQLN…NKKQ). The ITIM motif 1 signature appears at 615-620 (SLYASV). Short sequence motifs (ITIM motif) lie at residues 695–700 (VTYAQL) and 725–730 (SVYAAL). Phosphotyrosine; by LYN is present on residues Tyr697 and Tyr727.

As to quaternary structure, interacts with LYN, PTPN6/SHP-1 and PTPN11/SHP-2. Phosphorylated on tyrosine residues by LYN. Phosphorylation at Tyr-697 and Tyr-727 is important for interaction with PTPN6/SHP-1 and PTPN11/SHP-2.

The protein localises to the cell membrane. May act as receptor for class I MHC antigens. Becomes activated upon coligation with immune receptors, such as FCGR2B and the B-cell receptor. Down-regulates antigen-induced B-cell activation by recruiting phosphatases to its immunoreceptor tyrosine-based inhibitor motifs (ITIM). This is Leukocyte immunoglobulin-like receptor subfamily B member 3A from Rattus norvegicus (Rat).